An 88-amino-acid chain; its full sequence is Large ribosomal subunit protein bL27 (88 aa).

The segment at 1–24 is disordered; that stretch reads MATKKSGGSSGNGRDSRGRRLGVK.

This sequence belongs to the bacterial ribosomal protein bL27 family.

This is Large ribosomal subunit protein bL27 from Ehrlichia chaffeensis (strain ATCC CRL-10679 / Arkansas).